We begin with the raw amino-acid sequence, 423 residues long: Cyclin-dependent kinase 14 (423 aa).

The segment at 62 to 85 (VGKESPKVRRHSSPSSPTSPKFGK) is disordered. Residues 89–373 (YEKLEKLGEG…AQAALNHDYF (285 aa)) enclose the Protein kinase domain. Residues 95 to 103 (LGEGSYATV) and K118 contribute to the ATP site. The Proton acceptor role is filled by D210.

It belongs to the protein kinase superfamily. CMGC Ser/Thr protein kinase family. CDC2/CDKX subfamily. In terms of assembly, interacts with ccny; ccny mediates its recruitment to the plasma membrane and promotes phosphorylation of lrp6.

Its subcellular location is the cell membrane. The catalysed reaction is L-seryl-[protein] + ATP = O-phospho-L-seryl-[protein] + ADP + H(+). The enzyme catalyses L-threonyl-[protein] + ATP = O-phospho-L-threonyl-[protein] + ADP + H(+). Functionally, serine/threonine-protein kinase involved in the control of the eukaryotic cell cycle, whose activity is controlled by an associated cyclin. Acts as a cell-cycle regulator of Wnt signaling pathway during G2/M phase by mediating the phosphorylation of lrp6, leading to the activation of the Wnt signaling pathway. In Xenopus tropicalis (Western clawed frog), this protein is Cyclin-dependent kinase 14 (cdk14).